Reading from the N-terminus, the 138-residue chain is Thyrotropin subunit beta (138 aa).

The N-terminal stretch at 1-20 is a signal peptide; it reads MTAIYLMSMLFGLACGQAMS. Intrachain disulfides connect C22–C72, C36–C87, C39–C125, C47–C103, C51–C105, and C108–C115. N-linked (GlcNAc...) asparagine glycosylation is present at N43. Positions 133-138 are excised as a propeptide; sequence VVGFSI.

Belongs to the glycoprotein hormones subunit beta family. Heterodimer of a common alpha chain and a unique beta chain which confers biological specificity to thyrotropin, lutropin, follitropin and gonadotropin.

It is found in the secreted. Functionally, indispensable for the control of thyroid structure and metabolism. This Canis lupus familiaris (Dog) protein is Thyrotropin subunit beta (TSHB).